Reading from the N-terminus, the 117-residue chain is uncharacterized protein (117 aa).

Its subcellular location is the cytoplasm. The protein localises to the nucleus. This is an uncharacterized protein from Saccharomyces cerevisiae (strain ATCC 204508 / S288c) (Baker's yeast).